The primary structure comprises 108 residues: ATP-dependent Clp protease adapter protein ClpS (108 aa).

Residues 1–15 are compositionally biased toward basic and acidic residues; that stretch reads MPHESSPDSQHEHGV. The tract at residues 1–22 is disordered; sequence MPHESSPDSQHEHGVAVEAARP.

This sequence belongs to the ClpS family. In terms of assembly, binds to the N-terminal domain of the chaperone ClpA.

Involved in the modulation of the specificity of the ClpAP-mediated ATP-dependent protein degradation. The chain is ATP-dependent Clp protease adapter protein ClpS from Stenotrophomonas maltophilia (strain K279a).